The chain runs to 392 residues: Small ribosomal subunit protein uS9m (392 aa).

Residues 8–25 are compositionally biased toward low complexity; it reads RSSRAMSSASPASASDSD. Positions 8–27 are disordered; it reads RSSRAMSSASPASASDSDTS.

It belongs to the universal ribosomal protein uS9 family. As to quaternary structure, component of the mitochondrial ribosome small subunit (28S) which comprises a 12S rRNA and about 30 distinct proteins.

It is found in the mitochondrion. This Caenorhabditis elegans protein is Small ribosomal subunit protein uS9m (mrps-9).